The sequence spans 167 residues: Modulator of smoothened protein (167 aa).

4 helical membrane passes run 7–29 (ISGC…PDWI), 68–88 (TLFF…LLVI), 101–121 (WIAF…PVGF), and 139–159 (VGSS…GLLF).

The protein resides in the cell projection. Its subcellular location is the cilium membrane. It is found in the cell membrane. Acts as a negative regulator of hedgehog signaling probably by promoting internalization and subsequent degradation of smoothened protein (SMO) present in the ciliary membrane. Plays a role in sonic hedgehog (SHH)-induced spinal neural progenitor cells differentiation. The chain is Modulator of smoothened protein from Danio rerio (Zebrafish).